The chain runs to 202 residues: Potassium-transporting ATPase KdpC subunit 1 (202 aa).

The chain crosses the membrane as a helical span at residues 17–37; it reads LWVIAAVIYPFFMIAVGQIVF.

This sequence belongs to the KdpC family. The system is composed of three essential subunits: KdpA, KdpB and KdpC.

It is found in the cell inner membrane. Its function is as follows. Part of the high-affinity ATP-driven potassium transport (or Kdp) system, which catalyzes the hydrolysis of ATP coupled with the electrogenic transport of potassium into the cytoplasm. This subunit acts as a catalytic chaperone that increases the ATP-binding affinity of the ATP-hydrolyzing subunit KdpB by the formation of a transient KdpB/KdpC/ATP ternary complex. The chain is Potassium-transporting ATPase KdpC subunit 1 from Nostoc sp. (strain PCC 7120 / SAG 25.82 / UTEX 2576).